We begin with the raw amino-acid sequence, 234 residues long: Adenosine 5'-phosphosulfate reductase (234 aa).

4 residues coordinate [4Fe-4S] cluster: Cys-120, Cys-121, Cys-203, and Cys-206. The active-site Nucleophile; cysteine thiosulfonate intermediate is Cys-229.

Belongs to the PAPS reductase family. CysH subfamily. The cofactor is [4Fe-4S] cluster.

The protein resides in the cytoplasm. The enzyme catalyses [thioredoxin]-disulfide + sulfite + AMP + 2 H(+) = adenosine 5'-phosphosulfate + [thioredoxin]-dithiol. Its pathway is sulfur metabolism; hydrogen sulfide biosynthesis; sulfite from sulfate. Catalyzes the formation of sulfite from adenosine 5'-phosphosulfate (APS) using thioredoxin as an electron donor. The polypeptide is Adenosine 5'-phosphosulfate reductase (Bacillus cereus (strain AH187)).